A 288-amino-acid chain; its full sequence is Phosphopantetheinyl transferase (288 aa).

CoA is bound by residues Arg-60, 99-104, and 118-121; these read RTEMGK and NLSH. Mg(2+) contacts are provided by Asp-139 and Glu-196. CoA is bound at residue 196–200; the sequence is EAYLK.

It belongs to the P-Pant transferase superfamily. AcpS family. Monomer.

It localises to the cytoplasm. It is found in the cytosol. The enzyme catalyses apo-[ACP] + CoA = holo-[ACP] + adenosine 3',5'-bisphosphate + H(+). It participates in lipid metabolism; fatty acid biosynthesis. In terms of biological role, phosphopantetheinyl transferase that is essential for attaching phosphopantetheine to ACP domains of the polyunsaturated fatty acid (PUFA) synthase converting the inactive apo-synthase to the active holo-synthase. This chain is Phosphopantetheinyl transferase, found in Thraustochytrium sp. (strain ATCC 26185 / S-3).